A 388-amino-acid polypeptide reads, in one-letter code: N5-carboxyaminoimidazole ribonucleotide synthase (388 aa).

Residues K105, K140, 174–177, E182, and 267–268 contribute to the ATP site; these read ESFV and NE. The region spanning 109–297 is the ATP-grasp domain; sequence RHFLQNLGLP…QFALQLQAVT (189 aa).

This sequence belongs to the PurK/PurT family. In terms of assembly, homodimer.

It catalyses the reaction 5-amino-1-(5-phospho-beta-D-ribosyl)imidazole + hydrogencarbonate + ATP = 5-carboxyamino-1-(5-phospho-D-ribosyl)imidazole + ADP + phosphate + 2 H(+). It functions in the pathway purine metabolism; IMP biosynthesis via de novo pathway; 5-amino-1-(5-phospho-D-ribosyl)imidazole-4-carboxylate from 5-amino-1-(5-phospho-D-ribosyl)imidazole (N5-CAIR route): step 1/2. Functionally, catalyzes the ATP-dependent conversion of 5-aminoimidazole ribonucleotide (AIR) and HCO(3)(-) to N5-carboxyaminoimidazole ribonucleotide (N5-CAIR). The sequence is that of N5-carboxyaminoimidazole ribonucleotide synthase from Synechocystis sp. (strain ATCC 27184 / PCC 6803 / Kazusa).